Consider the following 210-residue polypeptide: Large ribosomal subunit protein bL25 (210 aa).

It belongs to the bacterial ribosomal protein bL25 family. CTC subfamily. As to quaternary structure, part of the 50S ribosomal subunit; part of the 5S rRNA/L5/L18/L25 subcomplex. Contacts the 5S rRNA. Binds to the 5S rRNA independently of L5 and L18.

In terms of biological role, this is one of the proteins that binds to the 5S RNA in the ribosome where it forms part of the central protuberance. This is Large ribosomal subunit protein bL25 from Frankia casuarinae (strain DSM 45818 / CECT 9043 / HFP020203 / CcI3).